Here is a 495-residue protein sequence, read N- to C-terminus: MAKLSLAEQISQLANPKPKDVDIENFEDRDDGSESGGDVDYDSDLATEHYVKVGKSKLRDDAPALNPKYKAGKVSRKALYDDEDEDGDGADGFIDEDDEDDEEDDEEGEGNGFIDDEVEVDEEDQDEDGDEDMEDEQDEDESDEELSENENDSSARATLKELLREEKKASKQQAKEAIVSDAQKGFAIHKQTDLYETLLDARITFQKAVQSANALPISDTKAEELGEDITNTLQDTKAKLSDFISQIAKMRHNMAVQDNVFAADSVKLSTKRTFDATLDNMDKLDTEFKAYETSVLSKWSQKVQASSAASALNSSKFKALNQSSANQVAATLADMDRLVKRTRMNRSNVVILGEEQMGAIQDAEGENYYIFDDSDFYRNLLKDLIDRRMVDSGSQSSGVKTWTATKAKTKKNVDTRASKGRKLRYHVQDKVQNFAAPRPVFTWEDDQIDELFAGLLGQRVNFNEDDDGEEKEKEEKEEKEEQELVIPDDGLRIFG.

Disordered stretches follow at residues 10-155 and 462-495; these read ISQL…DSSA and FNEDDDGEEKEKEEKEEKEEQELVIPDDGLRIFG. Residues 23–45 show a composition bias toward acidic residues; that stretch reads IENFEDRDDGSESGGDVDYDSDL. Over residues 46–62 the composition is skewed to basic and acidic residues; that stretch reads ATEHYVKVGKSKLRDDA. The segment covering 81–151 has biased composition (acidic residues); that stretch reads DDEDEDGDGA…SDEELSENEN (71 aa).

The protein belongs to the AATF family.

The protein localises to the nucleus. It is found in the nucleolus. This chain is Protein BFR2 (BFR2), found in Yarrowia lipolytica (strain CLIB 122 / E 150) (Yeast).